We begin with the raw amino-acid sequence, 239 residues long: Ribonuclease PH (239 aa).

Phosphate contacts are provided by residues Arg87 and 125–127 (GTR).

This sequence belongs to the RNase PH family. In terms of assembly, homohexameric ring arranged as a trimer of dimers.

It carries out the reaction tRNA(n+1) + phosphate = tRNA(n) + a ribonucleoside 5'-diphosphate. Its function is as follows. Phosphorolytic 3'-5' exoribonuclease that plays an important role in tRNA 3'-end maturation. Removes nucleotide residues following the 3'-CCA terminus of tRNAs; can also add nucleotides to the ends of RNA molecules by using nucleoside diphosphates as substrates, but this may not be physiologically important. Probably plays a role in initiation of 16S rRNA degradation (leading to ribosome degradation) during starvation. The protein is Ribonuclease PH of Ectopseudomonas mendocina (strain ymp) (Pseudomonas mendocina).